The following is a 103-amino-acid chain: Small ribosomal subunit protein uS14c (103 aa).

The protein belongs to the universal ribosomal protein uS14 family. In terms of assembly, part of the 30S ribosomal subunit.

The protein resides in the plastid. Its subcellular location is the chloroplast. In terms of biological role, binds 16S rRNA, required for the assembly of 30S particles. This Agrostis stolonifera (Creeping bentgrass) protein is Small ribosomal subunit protein uS14c.